The sequence spans 537 residues: [Pyruvate dehydrogenase [acetyl-transferring]]-phosphatase 1, mitochondrial (537 aa).

Residues 1-71 constitute a mitochondrion transit peptide; sequence MPAPTQLFFP…WWQYTQGRRY (71 aa). The region spanning 109-525 is the PPM-type phosphatase domain; it reads ILGFDSNQLP…DDITIIVVQF (417 aa). Mn(2+)-binding residues include aspartate 144 and glycine 145. At lysine 202 the chain carries N6-acetyllysine. Mn(2+)-binding residues include aspartate 418 and aspartate 516.

This sequence belongs to the PP2C family. As to quaternary structure, heterodimer of a catalytic (PDP1) and a regulatory (PDPR) subunit. The cofactor is Mn(2+). Mg(2+) serves as cofactor.

It is found in the mitochondrion. The enzyme catalyses O-phospho-L-seryl-[pyruvate dehydrogenase E1 alpha subunit] + H2O = L-seryl-[pyruvate dehydrogenase E1 alpha subunit] + phosphate. With respect to regulation, magnesium-dependent and calcium-stimulated. PDP1 activity strongly depends on its Ca(2+)-dependent binding to the lipoyl domain of E2 subunit of component of the pyruvate dehydrogenase complex. In terms of biological role, mitochondrial enzyme that catalyzes the dephosphorylation and concomitant reactivation of the alpha subunit of the E1 component of the pyruvate dehydrogenase complex (PDC), thereby stimulating the conversion of pyruvate into acetyl-CoA. The polypeptide is [Pyruvate dehydrogenase [acetyl-transferring]]-phosphatase 1, mitochondrial (Homo sapiens (Human)).